A 613-amino-acid polypeptide reads, in one-letter code: Putative two-component response regulator ARR21 (613 aa).

A Response regulatory domain is found at 17-131; the sequence is NVMVVDDDHV…DLTKIYQFAL (115 aa). Asp68 is subject to 4-aspartylphosphate. Residues 178–195 show a composition bias toward polar residues; the sequence is KSDSRTVNSTNGSCVSTD. The tract at residues 178–223 is disordered; that stretch reads KSDSRTVNSTNGSCVSTDGSRKNRKRKPNGGPSDDGESMSQPAKKK. The Nuclear localization signal motif lies at 221-224; it reads KKKK. Positions 224–274 form a DNA-binding region, myb-like GARP; sequence KIQWTDSLHDLFLQAIRHIGLDKAVPKKILAFMSVPYLTRENVASHLQKYR.

This sequence belongs to the ARR family. Type-B subfamily. Binds the target DNA as a monomer. Post-translationally, two-component system major event consists of a His-to-Asp phosphorelay between a sensor histidine kinase (HK) and a response regulator (RR). In plants, the His-to-Asp phosphorelay involves an additional intermediate named Histidine-containing phosphotransfer protein (HPt). This multistep phosphorelay consists of a His-Asp-His-Asp sequential transfer of a phosphate group between first a His and an Asp of the HK protein, followed by the transfer to a conserved His of the HPt protein and finally the transfer to an Asp in the receiver domain of the RR protein. In terms of tissue distribution, mainly expressed in siliques. Also found in germinating seedlings, stems, flowers and roots, but not in rosette leaves.

The protein localises to the nucleus. In terms of biological role, putative transcriptional activator that binds specifically to the DNA sequence 5'-[AG]GATT-3'. Functions as a response regulator involved in His-to-Asp phosphorelay signal transduction system. Phosphorylation of the Asp residue in the receiver domain activates the ability of the protein to promote the transcription of target genes. Could directly activate some type-A response regulators in response to cytokinins. The sequence is that of Putative two-component response regulator ARR21 (ARR21) from Arabidopsis thaliana (Mouse-ear cress).